We begin with the raw amino-acid sequence, 132 residues long: MVMTDPIADFLTRIRNANQANHSVVEAPASNIKRGIAEILKCEGFVKDVEVIEDDKQGIIRIFLKYGQNGERVITGLKRISKPGLRVYTKREDVPKVLNGLGIAIISTSEGLLTDREARQKNIGGEVITYVW.

Belongs to the universal ribosomal protein uS8 family. In terms of assembly, part of the 30S ribosomal subunit. Contacts proteins S5 and S12.

One of the primary rRNA binding proteins, it binds directly to 16S rRNA central domain where it helps coordinate assembly of the platform of the 30S subunit. This Streptococcus mutans serotype c (strain ATCC 700610 / UA159) protein is Small ribosomal subunit protein uS8.